The chain runs to 257 residues: MSLKKSPFFELRSGSVDTLLFTVKTTDLDALRAELVKRFEATPEFFADDVVAIDVRRLADGERVALADIRQMLSDVRMRPVGVVALATQGWATEAGLPLLEARDRRAPAAKAADEAEPVAAPAVEAAAAPAAEPTPEPGAASQPAGVQTLVIDRPLRSGQQIYAKGDLVVLAPVSHGAEIIAEGNIHIYAPLRGRALAGVHGNHDARIFCTCLEPELISIAGIYRTTENPLPADVLGKSVQIRLEEEKLMIEPLRLT.

The span at 123 to 141 (AVEAAAAPAAEPTPEPGAA) shows a compositional bias: low complexity. The interval 123–144 (AVEAAAAPAAEPTPEPGAASQP) is disordered.

It belongs to the MinC family. In terms of assembly, interacts with MinD and FtsZ.

In terms of biological role, cell division inhibitor that blocks the formation of polar Z ring septums. Rapidly oscillates between the poles of the cell to destabilize FtsZ filaments that have formed before they mature into polar Z rings. Prevents FtsZ polymerization. This Burkholderia multivorans (strain ATCC 17616 / 249) protein is Probable septum site-determining protein MinC.